The sequence spans 215 residues: Ankyrin repeat domain-containing protein 49 (215 aa).

ANK repeat units follow at residues 81 to 110 (DGYTPLHRAAYNNFVDMAKLLLQYHANPNA) and 114 to 143 (LGWTPLHSACKWNNADCAHLLLQFGADVNA).

Interacts with Bdbt; interaction promotes the stability of both complex members.

It localises to the cytoplasm. It is found in the cytosol. Its subcellular location is the cell membrane. In terms of biological role, required for regulating the establishment of planar cell polarity in the wing. Forms a complex with Bdbt which likely functions in the regulation of planar polarity by promoting the activity of Dco during planar polarity establishment. Within the complex, probably functions to stabilize Bdbt, while Bdbt directly promotes Dco activity in regulating phosphorylation of core proteins such as dsh, and asymmetric localization. This Drosophila melanogaster (Fruit fly) protein is Ankyrin repeat domain-containing protein 49.